The chain runs to 310 residues: Lipoyl synthase (310 aa).

[4Fe-4S] cluster contacts are provided by Cys45, Cys50, Cys56, Cys71, Cys75, Cys78, and Ser285. The 218-residue stretch at 57 to 274 (WTKKHATVMI…GSIARAKGFL (218 aa)) folds into the Radical SAM core domain.

The protein belongs to the radical SAM superfamily. Lipoyl synthase family. It depends on [4Fe-4S] cluster as a cofactor.

It localises to the cytoplasm. It catalyses the reaction [[Fe-S] cluster scaffold protein carrying a second [4Fe-4S](2+) cluster] + N(6)-octanoyl-L-lysyl-[protein] + 2 oxidized [2Fe-2S]-[ferredoxin] + 2 S-adenosyl-L-methionine + 4 H(+) = [[Fe-S] cluster scaffold protein] + N(6)-[(R)-dihydrolipoyl]-L-lysyl-[protein] + 4 Fe(3+) + 2 hydrogen sulfide + 2 5'-deoxyadenosine + 2 L-methionine + 2 reduced [2Fe-2S]-[ferredoxin]. It functions in the pathway protein modification; protein lipoylation via endogenous pathway; protein N(6)-(lipoyl)lysine from octanoyl-[acyl-carrier-protein]: step 2/2. In terms of biological role, catalyzes the radical-mediated insertion of two sulfur atoms into the C-6 and C-8 positions of the octanoyl moiety bound to the lipoyl domains of lipoate-dependent enzymes, thereby converting the octanoylated domains into lipoylated derivatives. This is Lipoyl synthase from Novosphingobium aromaticivorans (strain ATCC 700278 / DSM 12444 / CCUG 56034 / CIP 105152 / NBRC 16084 / F199).